A 266-amino-acid chain; its full sequence is Cysteine-rich repeat secretory protein 41 (266 aa).

The first 26 residues, 1 to 26 (MSSVFGSVHILAMIAIQLLLTHSVSS), serve as a signal peptide directing secretion. 2 consecutive Gnk2-homologous domains span residues 33–136 (YLHH…SVAS) and 142–253 (YEND…LYPF).

The protein belongs to the cysteine-rich repeat secretory protein family.

The protein localises to the secreted. The polypeptide is Cysteine-rich repeat secretory protein 41 (CRRSP41) (Arabidopsis thaliana (Mouse-ear cress)).